The primary structure comprises 1020 residues: Mediator of RNA polymerase II transcription subunit 16 (1020 aa).

The protein belongs to the Mediator complex subunit 16 family. As to quaternary structure, component of the Mediator complex.

The protein resides in the nucleus. Functionally, component of the Mediator complex, a coactivator involved in the regulated transcription of nearly all RNA polymerase II-dependent genes. Mediator functions as a bridge to convey information from gene-specific regulatory proteins to the basal RNA polymerase II transcription machinery. Mediator is recruited to promoters by direct interactions with regulatory proteins and serves as a scaffold for the assembly of a functional preinitiation complex with RNA polymerase II and the general transcription factors. In Scheffersomyces stipitis (strain ATCC 58785 / CBS 6054 / NBRC 10063 / NRRL Y-11545) (Yeast), this protein is Mediator of RNA polymerase II transcription subunit 16 (SIN4).